The chain runs to 336 residues: Vacuolar protein sorting-associated protein 26B (336 aa).

Phosphoserine is present on residues Ser302, Ser304, and Ser319.

Belongs to the VPS26 family. Component of the heterotrimeric retromer cargo-selective complex (CSC), also described as vacuolar protein sorting VPS subcomplex (VPS,) formed by VPS26 (VPS26A or VPS26B), VPS29 and VPS35. The CSC has a highly elongated structure with VPS26 and VPS29 binding independently at opposite distal ends of VPS35 as central platform. The CSC is believed to associate with variable sorting nexins to form functionally distinct retromer complex variants. The originally described retromer complex (also called SNX-BAR retromer) is a pentamer containing the CSC and a heterodimeric membrane-deforming subcomplex formed between SNX1 or SNX2 and SNX5 or SNX6 (also called SNX-BAR subcomplex); the respective CSC and SNX-BAR subcomplexes associate with low affinity. The CSC associates with SNX3 to form a SNX3-retromer complex. The CSC associates with SNX27, the WASH complex and the SNX-BAR subcomplex to form the SNX27-retromer complex. Interacts with VPS29, VPS35, TBC1D5, GOLPH3, SNX27.

Its subcellular location is the cytoplasm. The protein localises to the membrane. It localises to the early endosome. It is found in the late endosome. Acts as a component of the retromer cargo-selective complex (CSC). The CSC is believed to be the core functional component of retromer or respective retromer complex variants acting to prevent missorting of selected transmembrane cargo proteins into the lysosomal degradation pathway. The recruitment of the CSC to the endosomal membrane involves RAB7A and SNX3. The SNX-BAR retromer mediates retrograde transport of cargo proteins from endosomes to the trans-Golgi network (TGN) and is involved in endosome-to-plasma membrane transport for cargo protein recycling. The SNX3-retromer mediates the retrograde transport of WLS distinct from the SNX-BAR retromer pathway. The SNX27-retromer is believed to be involved in endosome-to-plasma membrane trafficking and recycling of a broad spectrum of cargo proteins. The CSC seems to act as recruitment hub for other proteins, such as the WASH complex and TBC1D5. May be involved in retrograde transport of SORT1 but not of IGF2R. Acts redundantly with VSP26A in SNX-27 mediated endocytic recycling of SLC2A1/GLUT1. The sequence is that of Vacuolar protein sorting-associated protein 26B (VPS26B) from Homo sapiens (Human).